A 142-amino-acid polypeptide reads, in one-letter code: UPF0102 protein PsycPRwf_0497 (142 aa).

This sequence belongs to the UPF0102 family.

This chain is UPF0102 protein PsycPRwf_0497, found in Psychrobacter sp. (strain PRwf-1).